A 466-amino-acid chain; its full sequence is MPEHVGKIVQVIGPVVDIKFDAENLPDIYNSIEIDMGDNKKLIAEVEQHVGDDIVRTIAMEGTDGLKRGMEAVNTGKPISVPVGENVLGRLFNVLGQTIDEAGDMNADKYYPIHRPAPTFEEQSVQPEMFETGIKVIDLLAPYQKGGKIGLFGGAGVGKTVLIQELINNIAKEHGGLSVFTGVGERTREGNDLYYEMKDSGVINKTALVFGQMNEPPGARMRVALTGLTMAEYFRDKGQDVLLFIDNIFRFTQAGSEVSALLGRIPSAVGYQPTLANEMGALQERITSTKQGSITSVQAVYVPADDLTDPAPATTFTHLDATTVLSREISNLGIYPAVSPLESTSRILDPRIVGEEHYEVANKVKHILERYQELQDIIAILGVDELSDEDRLLVGRARRVQRFLSQAFSVAEQFTGMKGQFVPVKDTIRSFKEILDGKCDDLPEAAFLFAGTIEDVKEKAKKMMES.

153–160 (GGAGVGKT) contributes to the ATP binding site.

Belongs to the ATPase alpha/beta chains family. F-type ATPases have 2 components, CF(1) - the catalytic core - and CF(0) - the membrane proton channel. CF(1) has five subunits: alpha(3), beta(3), gamma(1), delta(1), epsilon(1). CF(0) has three main subunits: a(1), b(2) and c(9-12). The alpha and beta chains form an alternating ring which encloses part of the gamma chain. CF(1) is attached to CF(0) by a central stalk formed by the gamma and epsilon chains, while a peripheral stalk is formed by the delta and b chains.

Its subcellular location is the cell membrane. It carries out the reaction ATP + H2O + 4 H(+)(in) = ADP + phosphate + 5 H(+)(out). Its function is as follows. Produces ATP from ADP in the presence of a proton gradient across the membrane. The catalytic sites are hosted primarily by the beta subunits. The polypeptide is ATP synthase subunit beta (Clostridium acetobutylicum (strain ATCC 824 / DSM 792 / JCM 1419 / IAM 19013 / LMG 5710 / NBRC 13948 / NRRL B-527 / VKM B-1787 / 2291 / W)).